Consider the following 732-residue polypeptide: 1,4-alpha-glucan branching enzyme GlgB 1 (732 aa).

Catalysis depends on Asp411, which acts as the Nucleophile. Glu464 serves as the catalytic Proton donor.

This sequence belongs to the glycosyl hydrolase 13 family. GlgB subfamily. As to quaternary structure, monomer.

The enzyme catalyses Transfers a segment of a (1-&gt;4)-alpha-D-glucan chain to a primary hydroxy group in a similar glucan chain.. Its pathway is glycan biosynthesis; glycogen biosynthesis. Its function is as follows. Catalyzes the formation of the alpha-1,6-glucosidic linkages in glycogen by scission of a 1,4-alpha-linked oligosaccharide from growing alpha-1,4-glucan chains and the subsequent attachment of the oligosaccharide to the alpha-1,6 position. The sequence is that of 1,4-alpha-glucan branching enzyme GlgB 1 from Xanthomonas oryzae pv. oryzae (strain KACC10331 / KXO85).